Here is a 472-residue protein sequence, read N- to C-terminus: Protein nucleotidyltransferase YdiU (472 aa).

ATP contacts are provided by Gly-86, Gly-88, Arg-89, Lys-109, Asp-121, Gly-122, Arg-172, and Arg-179. Asp-244 (proton acceptor) is an active-site residue. Mg(2+) contacts are provided by Asn-245 and Asp-254. Asp-254 contributes to the ATP binding site.

The protein belongs to the SELO family. Mg(2+) serves as cofactor. It depends on Mn(2+) as a cofactor.

The enzyme catalyses L-seryl-[protein] + ATP = 3-O-(5'-adenylyl)-L-seryl-[protein] + diphosphate. It carries out the reaction L-threonyl-[protein] + ATP = 3-O-(5'-adenylyl)-L-threonyl-[protein] + diphosphate. The catalysed reaction is L-tyrosyl-[protein] + ATP = O-(5'-adenylyl)-L-tyrosyl-[protein] + diphosphate. It catalyses the reaction L-histidyl-[protein] + UTP = N(tele)-(5'-uridylyl)-L-histidyl-[protein] + diphosphate. The enzyme catalyses L-seryl-[protein] + UTP = O-(5'-uridylyl)-L-seryl-[protein] + diphosphate. It carries out the reaction L-tyrosyl-[protein] + UTP = O-(5'-uridylyl)-L-tyrosyl-[protein] + diphosphate. In terms of biological role, nucleotidyltransferase involved in the post-translational modification of proteins. It can catalyze the addition of adenosine monophosphate (AMP) or uridine monophosphate (UMP) to a protein, resulting in modifications known as AMPylation and UMPylation. The sequence is that of Protein nucleotidyltransferase YdiU from Ruegeria pomeroyi (strain ATCC 700808 / DSM 15171 / DSS-3) (Silicibacter pomeroyi).